We begin with the raw amino-acid sequence, 284 residues long: Diaminopimelate epimerase (284 aa).

Asparagine 14 and asparagine 67 together coordinate substrate. Cysteine 76 (proton donor) is an active-site residue. Substrate-binding positions include 77-78, asparagine 166, asparagine 199, and 217-218; these read GN and ER. Residue cysteine 226 is the Proton acceptor of the active site. Position 227 to 228 (227 to 228) interacts with substrate; the sequence is GT.

This sequence belongs to the diaminopimelate epimerase family. Homodimer.

It is found in the cytoplasm. It catalyses the reaction (2S,6S)-2,6-diaminopimelate = meso-2,6-diaminopimelate. Its pathway is amino-acid biosynthesis; L-lysine biosynthesis via DAP pathway; DL-2,6-diaminopimelate from LL-2,6-diaminopimelate: step 1/1. In terms of biological role, catalyzes the stereoinversion of LL-2,6-diaminopimelate (L,L-DAP) to meso-diaminopimelate (meso-DAP), a precursor of L-lysine and an essential component of the bacterial peptidoglycan. In Geobacillus sp. (strain WCH70), this protein is Diaminopimelate epimerase.